The primary structure comprises 761 residues: Elongation factor G, mitochondrial (761 aa).

The transit peptide at 1–33 (MTSVLRGVLKTHLPRTLTLPRCARNFQTTTFLR) directs the protein to the mitochondrion. Residues 66–347 (TRLRNIGISA…SVVDYLPQPN (282 aa)) enclose the tr-type G domain. GTP-binding positions include 75 to 82 (AHIDSGKT), 146 to 150 (DTPGH), and 200 to 203 (NKMD).

It belongs to the TRAFAC class translation factor GTPase superfamily. Classic translation factor GTPase family. EF-G/EF-2 subfamily.

Its subcellular location is the mitochondrion. Its pathway is protein biosynthesis; polypeptide chain elongation. In terms of biological role, mitochondrial GTPase that catalyzes the GTP-dependent ribosomal translocation step during translation elongation. During this step, the ribosome changes from the pre-translocational (PRE) to the post-translocational (POST) state as the newly formed A-site-bound peptidyl-tRNA and P-site-bound deacylated tRNA move to the P and E sites, respectively. Catalyzes the coordinated movement of the two tRNA molecules, the mRNA and conformational changes in the ribosome. The protein is Elongation factor G, mitochondrial of Candida dubliniensis (strain CD36 / ATCC MYA-646 / CBS 7987 / NCPF 3949 / NRRL Y-17841) (Yeast).